A 416-amino-acid polypeptide reads, in one-letter code: Multifunctional CCA protein (416 aa).

The ATP site is built by glycine 8 and arginine 11. Residues glycine 8 and arginine 11 each contribute to the CTP site. Aspartate 21 and aspartate 23 together coordinate Mg(2+). The ATP site is built by arginine 91, arginine 137, and arginine 140. Residues arginine 91, arginine 137, and arginine 140 each contribute to the CTP site. The HD domain occupies 228–329; it reads TGVHTLMVLA…VKIFDKADFW (102 aa).

This sequence belongs to the tRNA nucleotidyltransferase/poly(A) polymerase family. Bacterial CCA-adding enzyme type 1 subfamily. In terms of assembly, monomer. Can also form homodimers and oligomers. Mg(2+) serves as cofactor. It depends on Ni(2+) as a cofactor.

It carries out the reaction a tRNA precursor + 2 CTP + ATP = a tRNA with a 3' CCA end + 3 diphosphate. The enzyme catalyses a tRNA with a 3' CCA end + 2 CTP + ATP = a tRNA with a 3' CCACCA end + 3 diphosphate. Functionally, catalyzes the addition and repair of the essential 3'-terminal CCA sequence in tRNAs without using a nucleic acid template. Adds these three nucleotides in the order of C, C, and A to the tRNA nucleotide-73, using CTP and ATP as substrates and producing inorganic pyrophosphate. tRNA 3'-terminal CCA addition is required both for tRNA processing and repair. Also involved in tRNA surveillance by mediating tandem CCA addition to generate a CCACCA at the 3' terminus of unstable tRNAs. While stable tRNAs receive only 3'-terminal CCA, unstable tRNAs are marked with CCACCA and rapidly degraded. In Shewanella baltica (strain OS185), this protein is Multifunctional CCA protein.